Reading from the N-terminus, the 396-residue chain is Gap junction gamma-1 protein (396 aa).

Over 1–22 (MSWSFLTRLLEEIHNHSTFVGK) the chain is Cytoplasmic. The chain crosses the membrane as a helical span at residues 23–45 (IWLTVLIVFRIVLTAVGGESIYY). Over 46–75 (DEQSKFVCNTEQPGCENVCYDAFAPLSHVR) the chain is Extracellular. A helical membrane pass occupies residues 76-95 (FWVFQIILVATPSVMYLGYA). The Cytoplasmic segment spans residues 96-175 (IHKIAKMEHG…RRIREDGLMK (80 aa)). Positions 145–165 (ELESDKENKEQSQPKPKHDGR) are disordered. Over residues 147–156 (ESDKENKEQS) the composition is skewed to basic and acidic residues. The chain crosses the membrane as a helical span at residues 176 to 198 (IYVLQLLARTVFEVGFLIGQYFL). Topologically, residues 199-228 (YGFQVHPFYVCSRLPCPHKIDCFISRPTEK) are extracellular. Residues 229–248 (TIFLLIMYGVTGLCLLLNIW) traverse the membrane as a helical segment. Over 249-396 (EMLHLGFGTI…SGDGKTSVWI (148 aa)) the chain is Cytoplasmic. The interval 353 to 396 (VQAYSHQNNPHGPREKKAKVGSKAGSNKSTASSKSGDGKTSVWI) is disordered. A compositionally biased stretch (polar residues) spans 376 to 387 (AGSNKSTASSKS).

The protein belongs to the connexin family. Gamma-type subfamily. In terms of assembly, a connexon is composed of a hexamer of connexins. Interacts with CNST.

It localises to the cell membrane. Its subcellular location is the cell junction. The protein resides in the gap junction. In terms of biological role, one gap junction consists of a cluster of closely packed pairs of transmembrane channels, the connexons, through which materials of low MW diffuse from one cell to a neighboring cell. The chain is Gap junction gamma-1 protein (GJC1) from Homo sapiens (Human).